A 206-amino-acid chain; its full sequence is MGSRPRGALSLLLLLLAPPSRPASGCPAPCRCSETRVDCGRRGLTWASLPAAFPPDTTELVLTDNNLTALPPGLLDTLPALRRVHLGANPWRCDCRLLPLRAWLAGRPEREFYRDLRCVAPLALRGRLLPYVAEDELRAACAPGLLCWGALVAQLALLVLGLLHALLLALLLSRLRRLRAQARARSTREFSLTAPLVAESAGGGAS.

The first 26 residues, Met1 to Cys26, serve as a signal peptide directing secretion. Intrachain disulfides connect Cys26/Cys32 and Cys30/Cys39. An LRRNT domain is found at Pro27–Pro55. Residues Pro27 to Ala150 are Extracellular-facing. One copy of the LRR repeat lies at Leu60 to Arg83. Residues Asn89–Pro143 enclose the LRRCT domain. Cystine bridges form between Cys93–Cys118 and Cys95–Cys141. The chain crosses the membrane as a helical span at residues Leu151–Leu171. Residues Leu172 to Ser206 lie on the Cytoplasmic side of the membrane. Ser186 carries the post-translational modification Phosphoserine. Phosphoserine; by PKA is present on Ser191. Residue Thr193 is modified to Phosphothreonine. At Ser200 the chain carries Phosphoserine.

In terms of assembly, two GP-Ib beta are disulfide-linked to one GP-Ib alpha. GP-IX is complexed with the GP-Ib heterodimer via a non covalent linkage. Interacts with TRAF4.

It is found in the membrane. Its function is as follows. Gp-Ib, a surface membrane protein of platelets, participates in the formation of platelet plugs by binding to von Willebrand factor, which is already bound to the subendothelium. The sequence is that of Platelet glycoprotein Ib beta chain (Gp1bb) from Rattus norvegicus (Rat).